A 178-amino-acid polypeptide reads, in one-letter code: CDP-archaeol synthase (178 aa).

5 helical membrane passes run 3–23, 56–76, 91–111, 123–143, and 149–169; these read LLLL…ANAV, FFGI…VILY, IILG…GSFI, APLL…YPLY, and LMVI…IIAY.

Belongs to the CDP-archaeol synthase family. Requires Mg(2+) as cofactor.

Its subcellular location is the cell membrane. The catalysed reaction is 2,3-bis-O-(geranylgeranyl)-sn-glycerol 1-phosphate + CTP + H(+) = CDP-2,3-bis-O-(geranylgeranyl)-sn-glycerol + diphosphate. Its pathway is membrane lipid metabolism; glycerophospholipid metabolism. Catalyzes the formation of CDP-2,3-bis-(O-geranylgeranyl)-sn-glycerol (CDP-archaeol) from 2,3-bis-(O-geranylgeranyl)-sn-glycerol 1-phosphate (DGGGP) and CTP. This reaction is the third ether-bond-formation step in the biosynthesis of archaeal membrane lipids. This is CDP-archaeol synthase from Methanococcus maripaludis (strain C7 / ATCC BAA-1331).